The primary structure comprises 344 residues: MEVALYDYELPKEAIAQTPVEPRDASRLMVLERRTGAVDHRIFRDLVHILHPGDLLVVNRTRVIPARLFGKKRDSDVTVEIVLLTPMGDDRWEVLVRPGRRLKPGVFVDLGEGRLAAEIVETTDFGGRVVRFHYSGDFDTLIDEIGQMPLPPYIETALPRQEAERYQTVYSQERGSAAAPTAGLHFTPQLLEDLKKRGIEITSVLLHVGLGTFRPVQVDRIEEHKMHSEFFQVDPEAARAIAKAKQEGRRVIAVGTTVARTLETAAGLHNGTVAAGSGWTDIFIYPGYTFQCIDGLITNFHLPRSTLLMLVSAFAGREQVLAAYREALEKGYRFFSFGDAMLII.

The protein belongs to the QueA family. As to quaternary structure, monomer.

Its subcellular location is the cytoplasm. It catalyses the reaction 7-aminomethyl-7-carbaguanosine(34) in tRNA + S-adenosyl-L-methionine = epoxyqueuosine(34) in tRNA + adenine + L-methionine + 2 H(+). It functions in the pathway tRNA modification; tRNA-queuosine biosynthesis. Its function is as follows. Transfers and isomerizes the ribose moiety from AdoMet to the 7-aminomethyl group of 7-deazaguanine (preQ1-tRNA) to give epoxyqueuosine (oQ-tRNA). The sequence is that of S-adenosylmethionine:tRNA ribosyltransferase-isomerase from Heliobacterium modesticaldum (strain ATCC 51547 / Ice1).